A 255-amino-acid polypeptide reads, in one-letter code: Urease accessory protein UreD 1 (255 aa).

This sequence belongs to the UreD family. In terms of assembly, ureD, UreF and UreG form a complex that acts as a GTP-hydrolysis-dependent molecular chaperone, activating the urease apoprotein by helping to assemble the nickel containing metallocenter of UreC. The UreE protein probably delivers the nickel.

The protein localises to the cytoplasm. In terms of biological role, required for maturation of urease via the functional incorporation of the urease nickel metallocenter. The chain is Urease accessory protein UreD 1 from Saccharopolyspora erythraea (strain ATCC 11635 / DSM 40517 / JCM 4748 / NBRC 13426 / NCIMB 8594 / NRRL 2338).